A 281-amino-acid chain; its full sequence is NADPH-dependent 7-cyano-7-deazaguanine reductase (281 aa).

81 to 83 serves as a coordination point for substrate; that stretch reads VES. 83–84 provides a ligand contact to NADPH; that stretch reads SK. The active-site Thioimide intermediate is cysteine 188. The active-site Proton donor is aspartate 195. 227 to 228 serves as a coordination point for substrate; sequence HE. Residue 256-257 participates in NADPH binding; sequence RG.

It belongs to the GTP cyclohydrolase I family. QueF type 2 subfamily. In terms of assembly, homodimer.

It localises to the cytoplasm. It catalyses the reaction 7-aminomethyl-7-carbaguanine + 2 NADP(+) = 7-cyano-7-deazaguanine + 2 NADPH + 3 H(+). It functions in the pathway tRNA modification; tRNA-queuosine biosynthesis. Functionally, catalyzes the NADPH-dependent reduction of 7-cyano-7-deazaguanine (preQ0) to 7-aminomethyl-7-deazaguanine (preQ1). This chain is NADPH-dependent 7-cyano-7-deazaguanine reductase, found in Acidovorax ebreus (strain TPSY) (Diaphorobacter sp. (strain TPSY)).